A 354-amino-acid polypeptide reads, in one-letter code: NADPH dehydrogenase (354 aa).

Residues Ser-23, Pro-24, Cys-26, Ala-58, and Gln-100 each contribute to the FMN site. Tyr-182 (proton donor) is an active-site residue. Residues Arg-230, Leu-301, Gly-323, and Arg-324 each contribute to the FMN site.

It belongs to the NADH:flavin oxidoreductase/NADH oxidase family. NamA subfamily. As to quaternary structure, homodimer. Behaves as an active monomer in solution while in the crystal packing assembles following the classical dimeric architecture of other thermophilic-like ene-reductases. FMN is required as a cofactor.

The enzyme catalyses A + NADPH + H(+) = AH2 + NADP(+). Functionally, ene-reductase that catalyzes the stereoselective reduction of activated C-C double bonds. Shows very good activity with 4-ketoisophorone, 2-cyclohexen-1-one and 1-octen-3-one, and low activity with maleimide, 2-methyl-pentenal, 2-methyl-cyclohexen-1-one, 2-cyclopenten-1-one and trans-2-hexen-1-al. Shows the highest catalytic efficiency with ketoisophorone. Exhibits a restricted substrate spectrum with generally lower activities compared to other ene-reductases. The chain is NADPH dehydrogenase from Chloroflexus aggregans (strain MD-66 / DSM 9485).